The chain runs to 189 residues: Holliday junction branch migration complex subunit RuvA (189 aa).

The interval 1 to 62 (MIVALKGNIE…EEAWSLYGFA (62 aa)) is domain I. Positions 63–138 (EEAEKRVFDT…FSLSLQEGSK (76 aa)) are domain II. The interval 138-139 (KA) is flexible linker. The interval 140 to 189 (STPPVFEESRLALESLGFKSELIAKALQNIQATTTQEIIKEALKKLQTLR) is domain III.

Belongs to the RuvA family. In terms of assembly, homotetramer. Forms an RuvA(8)-RuvB(12)-Holliday junction (HJ) complex. HJ DNA is sandwiched between 2 RuvA tetramers; dsDNA enters through RuvA and exits via RuvB. An RuvB hexamer assembles on each DNA strand where it exits the tetramer. Each RuvB hexamer is contacted by two RuvA subunits (via domain III) on 2 adjacent RuvB subunits; this complex drives branch migration. In the full resolvosome a probable DNA-RuvA(4)-RuvB(12)-RuvC(2) complex forms which resolves the HJ.

The protein resides in the cytoplasm. In terms of biological role, the RuvA-RuvB-RuvC complex processes Holliday junction (HJ) DNA during genetic recombination and DNA repair, while the RuvA-RuvB complex plays an important role in the rescue of blocked DNA replication forks via replication fork reversal (RFR). RuvA specifically binds to HJ cruciform DNA, conferring on it an open structure. The RuvB hexamer acts as an ATP-dependent pump, pulling dsDNA into and through the RuvAB complex. HJ branch migration allows RuvC to scan DNA until it finds its consensus sequence, where it cleaves and resolves the cruciform DNA. In Wolinella succinogenes (strain ATCC 29543 / DSM 1740 / CCUG 13145 / JCM 31913 / LMG 7466 / NCTC 11488 / FDC 602W) (Vibrio succinogenes), this protein is Holliday junction branch migration complex subunit RuvA.